We begin with the raw amino-acid sequence, 89 residues long: Elongation factor 1-beta (89 aa).

This sequence belongs to the EF-1-beta/EF-1-delta family.

In terms of biological role, promotes the exchange of GDP for GTP in EF-1-alpha/GDP, thus allowing the regeneration of EF-1-alpha/GTP that could then be used to form the ternary complex EF-1-alpha/GTP/AAtRNA. The polypeptide is Elongation factor 1-beta (Methanocella arvoryzae (strain DSM 22066 / NBRC 105507 / MRE50)).